A 462-amino-acid polypeptide reads, in one-letter code: MKLWGGRFTKETNQLVHNFNASISFDQKFYVQDIRGSIAHVTMLAKQGILNDEEKNKIIDGLNGIRDDIESGSLVIDSTYEDIHSFVEAHLISRIEEIGKKLHTGRSRNDQVALDMKLYTRDEITVLDELLRDLLFELYSLMKEHTETYMPGFTHLQKAQPITLSHHMSAYFEMFRRDRDRLSDIFKRMNTCPLGAGALAGTTYPLDRAYTASLLSFTEPTRNSMDSVSDRDYLIELLSALSTIMMHLSRFSEEIIIWNTNEYRFVEIDDAYSTGSSIMPQKKNPDIAELVRGKTGRVYGALMSLLTTMKGLPLAYNKDMQEDKELTFDAIDTVKGCLSLFTGMIRTMKFNRDTMKASAVLGFTNATDAADYLVNHGVAFRDAHGIIGHLVLTCIEKNCSIEDLSLTELQAISPVFKEDIYDAISLKTCVEKRNTIGGPGVDAMNEVIKECAKYLENNPSIS.

Belongs to the lyase 1 family. Argininosuccinate lyase subfamily.

The protein resides in the cytoplasm. The catalysed reaction is 2-(N(omega)-L-arginino)succinate = fumarate + L-arginine. The protein operates within amino-acid biosynthesis; L-arginine biosynthesis; L-arginine from L-ornithine and carbamoyl phosphate: step 3/3. This chain is Argininosuccinate lyase, found in Lachnoclostridium phytofermentans (strain ATCC 700394 / DSM 18823 / ISDg) (Clostridium phytofermentans).